A 229-amino-acid polypeptide reads, in one-letter code: 7-cyano-7-deazaguanine synthase (229 aa).

9 to 19 (YSGGLDSTTCM) provides a ligand contact to ATP. Zn(2+)-binding residues include Cys189, Cys199, Cys202, and Cys205.

This sequence belongs to the QueC family. Zn(2+) is required as a cofactor.

It carries out the reaction 7-carboxy-7-deazaguanine + NH4(+) + ATP = 7-cyano-7-deazaguanine + ADP + phosphate + H2O + H(+). It participates in purine metabolism; 7-cyano-7-deazaguanine biosynthesis. Catalyzes the ATP-dependent conversion of 7-carboxy-7-deazaguanine (CDG) to 7-cyano-7-deazaguanine (preQ(0)). In Geotalea daltonii (strain DSM 22248 / JCM 15807 / FRC-32) (Geobacter daltonii), this protein is 7-cyano-7-deazaguanine synthase.